The chain runs to 407 residues: Methylenetetrahydrofolate--tRNA-(uracil-5-)-methyltransferase TrmFO (407 aa).

Position 9–14 (Gly-9–Gly-14) interacts with FAD.

This sequence belongs to the MnmG family. TrmFO subfamily. Requires FAD as cofactor.

Its subcellular location is the cytoplasm. It catalyses the reaction uridine(54) in tRNA + (6R)-5,10-methylene-5,6,7,8-tetrahydrofolate + NADH + H(+) = 5-methyluridine(54) in tRNA + (6S)-5,6,7,8-tetrahydrofolate + NAD(+). It carries out the reaction uridine(54) in tRNA + (6R)-5,10-methylene-5,6,7,8-tetrahydrofolate + NADPH + H(+) = 5-methyluridine(54) in tRNA + (6S)-5,6,7,8-tetrahydrofolate + NADP(+). In terms of biological role, catalyzes the folate-dependent formation of 5-methyl-uridine at position 54 (M-5-U54) in all tRNAs. The chain is Methylenetetrahydrofolate--tRNA-(uracil-5-)-methyltransferase TrmFO from Lactobacillus helveticus (strain DPC 4571).